We begin with the raw amino-acid sequence, 648 residues long: 1-deoxy-D-xylulose-5-phosphate synthase (648 aa).

Thiamine diphosphate-binding positions include His-74 and 115–117; that span reads GHA. Mg(2+) is bound at residue Asp-146. Thiamine diphosphate contacts are provided by residues 147 to 148, Asn-176, Tyr-292, and Glu-375; that span reads GA. Asn-176 is a Mg(2+) binding site.

This sequence belongs to the transketolase family. DXPS subfamily. Homodimer. The cofactor is Mg(2+). Thiamine diphosphate serves as cofactor.

It catalyses the reaction D-glyceraldehyde 3-phosphate + pyruvate + H(+) = 1-deoxy-D-xylulose 5-phosphate + CO2. It functions in the pathway metabolic intermediate biosynthesis; 1-deoxy-D-xylulose 5-phosphate biosynthesis; 1-deoxy-D-xylulose 5-phosphate from D-glyceraldehyde 3-phosphate and pyruvate: step 1/1. Its function is as follows. Catalyzes the acyloin condensation reaction between C atoms 2 and 3 of pyruvate and glyceraldehyde 3-phosphate to yield 1-deoxy-D-xylulose-5-phosphate (DXP). The chain is 1-deoxy-D-xylulose-5-phosphate synthase from Synechococcus sp. (strain JA-2-3B'a(2-13)) (Cyanobacteria bacterium Yellowstone B-Prime).